The primary structure comprises 359 residues: Membrane-bound lytic murein transglycosylase C (359 aa).

The first 16 residues, 1-16, serve as a signal peptide directing secretion; that stretch reads MKKYLALALIAPLLIS. A lipid anchor (N-palmitoyl cysteine) is attached at Cys17. Residue Cys17 is the site of S-diacylglycerol cysteine attachment.

Belongs to the transglycosylase Slt family.

Its subcellular location is the cell outer membrane. It catalyses the reaction Exolytic cleavage of the (1-&gt;4)-beta-glycosidic linkage between N-acetylmuramic acid (MurNAc) and N-acetylglucosamine (GlcNAc) residues in peptidoglycan, from either the reducing or the non-reducing ends of the peptidoglycan chains, with concomitant formation of a 1,6-anhydrobond in the MurNAc residue.. Murein-degrading enzyme. May play a role in recycling of muropeptides during cell elongation and/or cell division. This chain is Membrane-bound lytic murein transglycosylase C, found in Escherichia fergusonii (strain ATCC 35469 / DSM 13698 / CCUG 18766 / IAM 14443 / JCM 21226 / LMG 7866 / NBRC 102419 / NCTC 12128 / CDC 0568-73).